The primary structure comprises 170 residues: Ureidoglycolate lyase (170 aa).

Belongs to the ureidoglycolate lyase family. In terms of assembly, homodimer. Ni(2+) is required as a cofactor.

The catalysed reaction is (S)-ureidoglycolate = urea + glyoxylate. The protein operates within nitrogen metabolism; (S)-allantoin degradation. Its function is as follows. Catalyzes the catabolism of the allantoin degradation intermediate (S)-ureidoglycolate, generating urea and glyoxylate. Involved in the utilization of allantoin as nitrogen source. This chain is Ureidoglycolate lyase, found in Pseudomonas syringae pv. tomato (strain ATCC BAA-871 / DC3000).